A 296-amino-acid polypeptide reads, in one-letter code: Phosphatidylserine decarboxylase proenzyme (296 aa).

Active-site charge relay system; for autoendoproteolytic cleavage activity residues include D92, H149, and S251. The Schiff-base intermediate with substrate; via pyruvic acid; for decarboxylase activity role is filled by S251. S251 carries the pyruvic acid (Ser); by autocatalysis modification.

The protein belongs to the phosphatidylserine decarboxylase family. PSD-B subfamily. Prokaryotic type I sub-subfamily. As to quaternary structure, heterodimer of a large membrane-associated beta subunit and a small pyruvoyl-containing alpha subunit. Pyruvate serves as cofactor. In terms of processing, is synthesized initially as an inactive proenzyme. Formation of the active enzyme involves a self-maturation process in which the active site pyruvoyl group is generated from an internal serine residue via an autocatalytic post-translational modification. Two non-identical subunits are generated from the proenzyme in this reaction, and the pyruvate is formed at the N-terminus of the alpha chain, which is derived from the carboxyl end of the proenzyme. The autoendoproteolytic cleavage occurs by a canonical serine protease mechanism, in which the side chain hydroxyl group of the serine supplies its oxygen atom to form the C-terminus of the beta chain, while the remainder of the serine residue undergoes an oxidative deamination to produce ammonia and the pyruvoyl prosthetic group on the alpha chain. During this reaction, the Ser that is part of the protease active site of the proenzyme becomes the pyruvoyl prosthetic group, which constitutes an essential element of the active site of the mature decarboxylase.

Its subcellular location is the cell membrane. The enzyme catalyses a 1,2-diacyl-sn-glycero-3-phospho-L-serine + H(+) = a 1,2-diacyl-sn-glycero-3-phosphoethanolamine + CO2. It functions in the pathway phospholipid metabolism; phosphatidylethanolamine biosynthesis; phosphatidylethanolamine from CDP-diacylglycerol: step 2/2. Catalyzes the formation of phosphatidylethanolamine (PtdEtn) from phosphatidylserine (PtdSer). This is Phosphatidylserine decarboxylase proenzyme from Hahella chejuensis (strain KCTC 2396).